A 256-amino-acid chain; its full sequence is Imidazole glycerol phosphate synthase subunit HisF (256 aa).

Catalysis depends on residues D11 and D130.

This sequence belongs to the HisA/HisF family. Heterodimer of HisH and HisF.

Its subcellular location is the cytoplasm. The catalysed reaction is 5-[(5-phospho-1-deoxy-D-ribulos-1-ylimino)methylamino]-1-(5-phospho-beta-D-ribosyl)imidazole-4-carboxamide + L-glutamine = D-erythro-1-(imidazol-4-yl)glycerol 3-phosphate + 5-amino-1-(5-phospho-beta-D-ribosyl)imidazole-4-carboxamide + L-glutamate + H(+). It participates in amino-acid biosynthesis; L-histidine biosynthesis; L-histidine from 5-phospho-alpha-D-ribose 1-diphosphate: step 5/9. IGPS catalyzes the conversion of PRFAR and glutamine to IGP, AICAR and glutamate. The HisF subunit catalyzes the cyclization activity that produces IGP and AICAR from PRFAR using the ammonia provided by the HisH subunit. The sequence is that of Imidazole glycerol phosphate synthase subunit HisF from Thioalkalivibrio sulfidiphilus (strain HL-EbGR7).